Consider the following 99-residue polypeptide: Plastocyanin (99 aa).

In terms of domain architecture, Plastocyanin-like spans 1-99 (IEVLLGGGDG…AGMVGKVTVN (99 aa)). Residues His37, Cys84, His87, and Met92 each contribute to the Cu cation site.

This sequence belongs to the plastocyanin family. The cofactor is Cu(2+).

It is found in the plastid. It localises to the chloroplast thylakoid membrane. In terms of biological role, participates in electron transfer between P700 and the cytochrome b6-f complex in photosystem I. In Capsella bursa-pastoris (Shepherd's purse), this protein is Plastocyanin (PETE).